A 160-amino-acid chain; its full sequence is Phosphopantetheine adenylyltransferase (160 aa).

Thr9 serves as a coordination point for substrate. ATP contacts are provided by residues 9–10 (TF) and His17. 3 residues coordinate substrate: Lys41, Leu73, and Arg87. Residues 88 to 90 (GLR), Glu98, and 123 to 129 (FSYTSSS) each bind ATP.

Belongs to the bacterial CoaD family. As to quaternary structure, homohexamer. Mg(2+) serves as cofactor.

The protein localises to the cytoplasm. The catalysed reaction is (R)-4'-phosphopantetheine + ATP + H(+) = 3'-dephospho-CoA + diphosphate. The protein operates within cofactor biosynthesis; coenzyme A biosynthesis; CoA from (R)-pantothenate: step 4/5. Reversibly transfers an adenylyl group from ATP to 4'-phosphopantetheine, yielding dephospho-CoA (dPCoA) and pyrophosphate. This Opitutus terrae (strain DSM 11246 / JCM 15787 / PB90-1) protein is Phosphopantetheine adenylyltransferase.